The primary structure comprises 223 residues: Translation initiation factor 6 (223 aa).

The protein belongs to the eIF-6 family.

In terms of biological role, binds to the 50S ribosomal subunit and prevents its association with the 30S ribosomal subunit to form the 70S initiation complex. The polypeptide is Translation initiation factor 6 (Saccharolobus islandicus (strain M.16.27) (Sulfolobus islandicus)).